The chain runs to 216 residues: Peptide methionine sulfoxide reductase MsrA (216 aa).

Cys54 is an active-site residue.

The protein belongs to the MsrA Met sulfoxide reductase family.

It carries out the reaction L-methionyl-[protein] + [thioredoxin]-disulfide + H2O = L-methionyl-(S)-S-oxide-[protein] + [thioredoxin]-dithiol. It catalyses the reaction [thioredoxin]-disulfide + L-methionine + H2O = L-methionine (S)-S-oxide + [thioredoxin]-dithiol. Its function is as follows. Has an important function as a repair enzyme for proteins that have been inactivated by oxidation. Catalyzes the reversible oxidation-reduction of methionine sulfoxide in proteins to methionine. The sequence is that of Peptide methionine sulfoxide reductase MsrA from Xylella fastidiosa (strain M12).